A 503-amino-acid chain; its full sequence is Maturase K (503 aa).

This sequence belongs to the intron maturase 2 family. MatK subfamily.

Its subcellular location is the plastid. It localises to the chloroplast. In terms of biological role, usually encoded in the trnK tRNA gene intron. Probably assists in splicing its own and other chloroplast group II introns. This is Maturase K from Cercocarpus betuloides (Mountain mahogany).